The following is a 240-amino-acid chain: Ubiquitin domain-containing protein 1 (240 aa).

The tract at residues Met-1–Asp-48 is disordered. A compositionally biased stretch (low complexity) spans Ser-12–Gln-22. Over residues Gly-28–Ser-42 the composition is skewed to basic and acidic residues. The Ubiquitin-like domain occupies Phe-153–Arg-228.

Functionally, may be involved in the regulation of cellular senescence through a positive feedback loop with TP53. The chain is Ubiquitin domain-containing protein 1 (ubtd1) from Xenopus tropicalis (Western clawed frog).